The chain runs to 92 residues: Putative regulatory protein CTN_0877 (92 aa).

This sequence belongs to the RemA family.

This Thermotoga neapolitana (strain ATCC 49049 / DSM 4359 / NBRC 107923 / NS-E) protein is Putative regulatory protein CTN_0877.